Reading from the N-terminus, the 109-residue chain is Ig kappa chain V region K16-167 (109 aa).

The tract at residues 1-23 (ALVMTQTPSPVSAAVGGTVTISC) is framework-1. Residues 24–35 (QASQSVYSNNLS) form a complementarity-determining-1 region. Positions 36–50 (WFQQKPGQPPKLLIY) are framework-2. The complementarity-determining-2 stretch occupies residues 51–57 (KASTLAS). Positions 58 to 89 (GVPSRFKGSGSGTQFTLPISGVECDDAATYYC) are framework-3. The tract at residues 90-99 (QGTNTGNNIV) is complementarity-determining-3. Residues 100 to 109 (FGTGTEVVVK) form a framework-4 region.

In Oryctolagus cuniculus (Rabbit), this protein is Ig kappa chain V region K16-167.